A 475-amino-acid chain; its full sequence is Ribulose bisphosphate carboxylase large chain (475 aa).

The propeptide occupies 1 to 2 (MS). Residue proline 3 is modified to N-acetylproline. At lysine 14 the chain carries N6,N6,N6-trimethyllysine. Residues asparagine 123 and threonine 173 each contribute to the substrate site. Residue lysine 175 is the Proton acceptor of the active site. Position 177 (lysine 177) interacts with substrate. Mg(2+)-binding residues include lysine 201, aspartate 203, and glutamate 204. Lysine 201 is subject to N6-carboxylysine. The active-site Proton acceptor is the histidine 294. Substrate-binding residues include arginine 295, histidine 327, and serine 379.

Belongs to the RuBisCO large chain family. Type I subfamily. As to quaternary structure, heterohexadecamer of 8 large chains and 8 small chains; disulfide-linked. The disulfide link is formed within the large subunit homodimers. Requires Mg(2+) as cofactor. In terms of processing, the disulfide bond which can form in the large chain dimeric partners within the hexadecamer appears to be associated with oxidative stress and protein turnover.

The protein resides in the plastid. The protein localises to the chloroplast. It catalyses the reaction 2 (2R)-3-phosphoglycerate + 2 H(+) = D-ribulose 1,5-bisphosphate + CO2 + H2O. The catalysed reaction is D-ribulose 1,5-bisphosphate + O2 = 2-phosphoglycolate + (2R)-3-phosphoglycerate + 2 H(+). Functionally, ruBisCO catalyzes two reactions: the carboxylation of D-ribulose 1,5-bisphosphate, the primary event in carbon dioxide fixation, as well as the oxidative fragmentation of the pentose substrate in the photorespiration process. Both reactions occur simultaneously and in competition at the same active site. This chain is Ribulose bisphosphate carboxylase large chain, found in Cedrus deodara (Deodar cedar).